Here is a 219-residue protein sequence, read N- to C-terminus: Ribonuclease HII (219 aa).

An RNase H type-2 domain is found at 10-219; that stretch reads HLEAGTDEAG…LLPEQTVLDL (210 aa). A divalent metal cation is bound by residues Asp-16, Glu-17, and Asp-108.

The protein belongs to the RNase HII family. Mn(2+) serves as cofactor. Requires Mg(2+) as cofactor.

The protein resides in the cytoplasm. It catalyses the reaction Endonucleolytic cleavage to 5'-phosphomonoester.. Endonuclease that specifically degrades the RNA of RNA-DNA hybrids. This is Ribonuclease HII from Flavobacterium psychrophilum (strain ATCC 49511 / DSM 21280 / CIP 103535 / JIP02/86).